Reading from the N-terminus, the 176-residue chain is Translation initiation factor IF-3 (176 aa).

The protein belongs to the IF-3 family. Monomer.

It localises to the cytoplasm. Functionally, IF-3 binds to the 30S ribosomal subunit and shifts the equilibrium between 70S ribosomes and their 50S and 30S subunits in favor of the free subunits, thus enhancing the availability of 30S subunits on which protein synthesis initiation begins. The sequence is that of Translation initiation factor IF-3 from Streptococcus equi subsp. zooepidemicus (strain H70).